A 156-amino-acid polypeptide reads, in one-letter code: Small ribosomal subunit protein uS7 (156 aa).

The protein belongs to the universal ribosomal protein uS7 family. As to quaternary structure, part of the 30S ribosomal subunit. Contacts proteins S9 and S11.

Its function is as follows. One of the primary rRNA binding proteins, it binds directly to 16S rRNA where it nucleates assembly of the head domain of the 30S subunit. Is located at the subunit interface close to the decoding center, probably blocks exit of the E-site tRNA. The chain is Small ribosomal subunit protein uS7 from Shewanella sp. (strain MR-7).